We begin with the raw amino-acid sequence, 325 residues long: Beta-ketoacyl-[acyl-carrier-protein] synthase III (325 aa).

Residues C116 and H252 contribute to the active site. The segment at 253–257 (QANLR) is ACP-binding. The active site involves N282.

Belongs to the thiolase-like superfamily. FabH family. In terms of assembly, homodimer.

The protein localises to the cytoplasm. The catalysed reaction is malonyl-[ACP] + acetyl-CoA + H(+) = 3-oxobutanoyl-[ACP] + CO2 + CoA. It functions in the pathway lipid metabolism; fatty acid biosynthesis. In terms of biological role, catalyzes the condensation reaction of fatty acid synthesis by the addition to an acyl acceptor of two carbons from malonyl-ACP. Catalyzes the first condensation reaction which initiates fatty acid synthesis and may therefore play a role in governing the total rate of fatty acid production. Possesses both acetoacetyl-ACP synthase and acetyl transacylase activities. Its substrate specificity determines the biosynthesis of branched-chain and/or straight-chain of fatty acids. The protein is Beta-ketoacyl-[acyl-carrier-protein] synthase III of Xanthomonas oryzae pv. oryzae (strain MAFF 311018).